We begin with the raw amino-acid sequence, 728 residues long: Probable subtilase-type serine protease DR_A0283 (728 aa).

The first 22 residues, 1–22 (MPGALPMKKISLAVLSLTTLLA), serve as a signal peptide directing secretion. Positions 23 to 148 (ACGQPQTSPQ…RTAQDQLGAQ (126 aa)) are excised as a propeptide. Positions 159–471 (QYALDSNHLH…YGLIRMDKLA (313 aa)) constitute a Peptidase S8 domain. Active-site charge relay system residues include Asp-188, His-242, and Ser-412.

The protein belongs to the peptidase S8 family.

It is found in the secreted. The chain is Probable subtilase-type serine protease DR_A0283 from Deinococcus radiodurans (strain ATCC 13939 / DSM 20539 / JCM 16871 / CCUG 27074 / LMG 4051 / NBRC 15346 / NCIMB 9279 / VKM B-1422 / R1).